We begin with the raw amino-acid sequence, 429 residues long: Trigger factor (429 aa).

Positions D162–P247 constitute a PPIase FKBP-type domain.

The protein belongs to the FKBP-type PPIase family. Tig subfamily.

The protein resides in the cytoplasm. It catalyses the reaction [protein]-peptidylproline (omega=180) = [protein]-peptidylproline (omega=0). Involved in protein export. Acts as a chaperone by maintaining the newly synthesized protein in an open conformation. Functions as a peptidyl-prolyl cis-trans isomerase. The chain is Trigger factor from Fusobacterium nucleatum subsp. nucleatum (strain ATCC 25586 / DSM 15643 / BCRC 10681 / CIP 101130 / JCM 8532 / KCTC 2640 / LMG 13131 / VPI 4355).